The sequence spans 400 residues: Argininosuccinate synthase (400 aa).

ATP contacts are provided by residues 9–17 (AYSGGVDTS) and alanine 37. Tyrosine 88 contributes to the L-citrulline binding site. Position 118 (glycine 118) interacts with ATP. Threonine 120, asparagine 124, and aspartate 125 together coordinate L-aspartate. Position 124 (asparagine 124) interacts with L-citrulline. L-citrulline-binding residues include arginine 128, serine 176, serine 185, glutamate 261, and tyrosine 273.

It belongs to the argininosuccinate synthase family. Type 1 subfamily. In terms of assembly, homotetramer.

Its subcellular location is the cytoplasm. It carries out the reaction L-citrulline + L-aspartate + ATP = 2-(N(omega)-L-arginino)succinate + AMP + diphosphate + H(+). Its pathway is amino-acid biosynthesis; L-arginine biosynthesis; L-arginine from L-ornithine and carbamoyl phosphate: step 2/3. The chain is Argininosuccinate synthase from Prochlorococcus marinus (strain MIT 9211).